The chain runs to 79 residues: Small ribosomal subunit protein bS16 (79 aa).

This sequence belongs to the bacterial ribosomal protein bS16 family.

This Oleidesulfovibrio alaskensis (strain ATCC BAA-1058 / DSM 17464 / G20) (Desulfovibrio alaskensis) protein is Small ribosomal subunit protein bS16.